The chain runs to 381 residues: MESIGIVAPHKMHFTEPLQLQNGSSLAGYDLMVETYGTLNAARSNAVLVCHALNASHHVAGVYADNPKDIGWWDNMVGPGKPLDTDKFFVIGVNNLGSCFGSTGPMSIDPATGNPYGAAFPVVTVEDWVNAQARVADQFGITRFAAVMGGSLGGMQALAWSMMYPERVGHCIVVASTPKLSAQNIAFNEVARSAILSDPDFHGGNYYAHNVKPKRGLRVARMIGHITYLSDDDMAEKFGRSLRRAEGAVDAYNFNFDVEFEVESYLRYQGDKFADYFDANTYLLITRALDYFDPAKAFDGDLTAAVAHTTAKYLIASFSTDWRFAPARSRELVKALLDHKRTVTYAEIDAPHGHDAFLLDDARYHNLMRAYYERIANEVNA.

The region spanning 45–360 (NAVLVCHALN…PHGHDAFLLD (316 aa)) is the AB hydrolase-1 domain. Catalysis depends on serine 151, which acts as the Nucleophile. Substrate is bound at residue arginine 221. Residues aspartate 321 and histidine 354 contribute to the active site. Aspartate 355 lines the substrate pocket.

Belongs to the AB hydrolase superfamily. MetX family. As to quaternary structure, homodimer.

Its subcellular location is the cytoplasm. It catalyses the reaction L-homoserine + succinyl-CoA = O-succinyl-L-homoserine + CoA. It functions in the pathway amino-acid biosynthesis; L-methionine biosynthesis via de novo pathway; O-succinyl-L-homoserine from L-homoserine: step 1/1. Its function is as follows. Transfers a succinyl group from succinyl-CoA to L-homoserine, forming succinyl-L-homoserine. This Paraburkholderia phytofirmans (strain DSM 17436 / LMG 22146 / PsJN) (Burkholderia phytofirmans) protein is Homoserine O-succinyltransferase.